Here is a 370-residue protein sequence, read N- to C-terminus: Myomodulin neuropeptides 1 (370 aa).

The signal sequence occupies residues 1 to 18; the sequence is MQVYMLLPLAVFASLTYQ. Residues 19–50 constitute a propeptide that is removed on maturation; it reads GACEETAAAQTSSDASTSSASSEHAENELSRA. The segment covering 28 to 40 has biased composition (low complexity); the sequence is QTSSDASTSSASS. The disordered stretch occupies residues 28 to 52; the sequence is QTSSDASTSSASSEHAENELSRAKR. A leucine amide mark is found at leucine 60 and leucine 69. A propeptide spanning residues 73-190 is cleaved from the precursor; the sequence is GGPVEPESEE…EPEEGGLGEE (118 aa). Leucine 199 and leucine 209 each carry leucine amide. Positions 210 to 226 are enriched in basic and acidic residues; that stretch reads GKREGEEGDEMDKKQDE. The tract at residues 210-230 is disordered; the sequence is GKREGEEGDEMDKKQDESLND. A propeptide spanning residues 213–237 is cleaved from the precursor; sequence EGEEGDEMDKKQDESLNDDFENDDI. 11 positions are modified to leucine amide: leucine 246, leucine 256, leucine 266, leucine 276, leucine 286, leucine 296, leucine 306, leucine 316, leucine 326, leucine 336, and leucine 346. The segment at 344–370 is disordered; sequence LRLGKRDDDEKEKKSLNMSRLGKRSTQ. Residues 347-358 show a composition bias toward basic and acidic residues; sequence GKRDDDEKEKKS. Residues 350 to 355 constitute a propeptide that is removed on maturation; it reads DDDEKE. Leucine 364 bears the Leucine amide mark. A propeptide spanning residues 368–370 is cleaved from the precursor; sequence STQ.

In terms of tissue distribution, expressed in all ganglia of the CNS, but only in a subset of neurons including L10 in the abdominal ganglion and B16 in the buccal ganglion.

Its subcellular location is the secreted. Its function is as follows. Exogenous application of myomodulins potentiates ARC muscle contraction. This chain is Myomodulin neuropeptides 1 (MYOMOD1), found in Aplysia californica (California sea hare).